Here is a 281-residue protein sequence, read N- to C-terminus: Pantothenate synthetase (281 aa).

30-37 is an ATP binding site; sequence MGNLHQGH. H37 serves as the catalytic Proton donor. Q61 contacts (R)-pantoate. Q61 provides a ligand contact to beta-alanine. An ATP-binding site is contributed by 149–152; it reads GNKD. Q155 lines the (R)-pantoate pocket. Residues I178 and 186 to 189 contribute to the ATP site; that span reads MSSR.

Belongs to the pantothenate synthetase family. In terms of assembly, homodimer.

It localises to the cytoplasm. It carries out the reaction (R)-pantoate + beta-alanine + ATP = (R)-pantothenate + AMP + diphosphate + H(+). It functions in the pathway cofactor biosynthesis; (R)-pantothenate biosynthesis; (R)-pantothenate from (R)-pantoate and beta-alanine: step 1/1. In terms of biological role, catalyzes the condensation of pantoate with beta-alanine in an ATP-dependent reaction via a pantoyl-adenylate intermediate. The polypeptide is Pantothenate synthetase (Shewanella baltica (strain OS155 / ATCC BAA-1091)).